We begin with the raw amino-acid sequence, 411 residues long: Alpha-1-antitrypsin 1-6 (411 aa).

An N-terminal signal peptide occupies residues 1 to 25; it reads MTTPFSSHGLLLLVGLCCLLLITKT. 4 N-linked (GlcNAc...) asparagine glycosylation sites follow: Asn50, Asn89, Asn101, and Asn164.

The protein belongs to the serpin family. As to expression, expressed predominantly in epididymis where it is found in the epithelial cells of the caput, corpus and cauda epididymis.

Its subcellular location is the secreted. In terms of biological role, inhibitor of serine proteases. The chain is Alpha-1-antitrypsin 1-6 from Mus musculus (Mouse).